The chain runs to 455 residues: Vimentin (455 aa).

Residues 1 to 87 (MASRTNTSSY…GLADAINTEF (87 aa)) are head. Residues 87 to 122 (FKTNRTNEKAEMQHLNDRFASYIDKVRFLEQQNKIL) adopt a coiled-coil conformation. The segment at 88–122 (KTNRTNEKAEMQHLNDRFASYIDKVRFLEQQNKIL) is coil 1A. Residues 94-402 (EKAEMQHLND…KLLEGEESRI (309 aa)) enclose the IF rod domain. The linker 1 stretch occupies residues 123-144 (IAELEQMRGKGSSRVGDLYQDE). The stretch at 145–236 (MRELRRQVDQ…KLHDEELAEL (92 aa)) forms a coiled coil. The tract at residues 145-236 (MRELRRQVDQ…KLHDEELAEL (92 aa)) is coil 1B. A linker 12 region spans residues 237-259 (QIQIQEQHVQIDMEVAKPDLTAA). Residues 260 to 398 (LKDVRQQYET…ATYRKLLEGE (139 aa)) form a coil 2 region. The stretch at 294–398 (ARNNEAIRLA…ATYRKLLEGE (105 aa)) forms a coiled coil. The interval 399-455 (ESRITTPFPNLSSLTLRETMKETRPAMDSLSKKVVIKTIETRDGHIINESSQNDDLE) is tail.

This sequence belongs to the intermediate filament family. In terms of assembly, homomer assembled from elementary dimers. One of the most prominent phosphoproteins in various cells of mesenchymal origin. Phosphorylation is enhanced during cell division, at which time vimentin filaments are significantly reorganized.

It localises to the cytoplasm. Its subcellular location is the cytoskeleton. It is found in the nucleus matrix. Its function is as follows. Vimentins are class-III intermediate filaments found in various non-epithelial cells, especially mesenchymal cells. Vimentin is attached to the nucleus, endoplasmic reticulum, and mitochondria, either laterally or terminally. The chain is Vimentin (vim) from Cyprinus carpio (Common carp).